The following is a 150-amino-acid chain: Large ribosomal subunit protein bL9 (150 aa).

The protein belongs to the bacterial ribosomal protein bL9 family.

In terms of biological role, binds to the 23S rRNA. The protein is Large ribosomal subunit protein bL9 of Sodalis glossinidius (strain morsitans).